The following is a 113-amino-acid chain: Hydrogenase maturation factor HypA (113 aa).

Position 2 (His2) interacts with Ni(2+). Zn(2+) contacts are provided by Cys73, Cys76, Cys89, and Cys92.

It belongs to the HypA/HybF family.

Its function is as follows. Involved in the maturation of [NiFe] hydrogenases. Required for nickel insertion into the metal center of the hydrogenase. This is Hydrogenase maturation factor HypA from Xanthobacter autotrophicus (strain ATCC BAA-1158 / Py2).